Consider the following 644-residue polypeptide: Exoribonuclease 2 (644 aa).

One can recognise an RNB domain in the interval 189–516 (RRDLTALDFV…NHRLLKAIIK (328 aa)). Residues 561–643 (DTRFAAEILD…ETRSIIARPA (83 aa)) enclose the S1 motif domain.

This sequence belongs to the RNR ribonuclease family. RNase II subfamily.

It is found in the cytoplasm. It catalyses the reaction Exonucleolytic cleavage in the 3'- to 5'-direction to yield nucleoside 5'-phosphates.. Functionally, involved in mRNA degradation. Hydrolyzes single-stranded polyribonucleotides processively in the 3' to 5' direction. This chain is Exoribonuclease 2, found in Klebsiella pneumoniae (strain 342).